Consider the following 150-residue polypeptide: Non-structural protein (150 aa).

The interval Pro93 to Met140 is apoptotic activity.

In terms of biological role, disrupts the host mitochondrial membrane potential and induces apoptosis probably by inducing host CASP8 and CASP9. The polypeptide is Non-structural protein (Bos taurus (Bovine)).